We begin with the raw amino-acid sequence, 187 residues long: Large ribosomal subunit protein bL17 (187 aa).

The disordered stretch occupies residues 122–187; that stretch reads PKVRSSRTST…EADAAEKSDK (66 aa). Low complexity predominate over residues 127-144; the sequence is SRTSTATAPAAAAPAAEA. Acidic residues-rich tracts occupy residues 145 to 157 and 165 to 180; these read PAEE…EETD and TPAE…VEAD.

This sequence belongs to the bacterial ribosomal protein bL17 family. As to quaternary structure, part of the 50S ribosomal subunit. Contacts protein L32.

This chain is Large ribosomal subunit protein bL17, found in Clavibacter michiganensis subsp. michiganensis (strain NCPPB 382).